The sequence spans 258 residues: Imidazole glycerol phosphate synthase subunit HisF (258 aa).

Catalysis depends on residues aspartate 11 and aspartate 130.

It belongs to the HisA/HisF family. As to quaternary structure, heterodimer of HisH and HisF.

The protein localises to the cytoplasm. The enzyme catalyses 5-[(5-phospho-1-deoxy-D-ribulos-1-ylimino)methylamino]-1-(5-phospho-beta-D-ribosyl)imidazole-4-carboxamide + L-glutamine = D-erythro-1-(imidazol-4-yl)glycerol 3-phosphate + 5-amino-1-(5-phospho-beta-D-ribosyl)imidazole-4-carboxamide + L-glutamate + H(+). The protein operates within amino-acid biosynthesis; L-histidine biosynthesis; L-histidine from 5-phospho-alpha-D-ribose 1-diphosphate: step 5/9. Functionally, IGPS catalyzes the conversion of PRFAR and glutamine to IGP, AICAR and glutamate. The HisF subunit catalyzes the cyclization activity that produces IGP and AICAR from PRFAR using the ammonia provided by the HisH subunit. The chain is Imidazole glycerol phosphate synthase subunit HisF from Methylobacterium nodulans (strain LMG 21967 / CNCM I-2342 / ORS 2060).